We begin with the raw amino-acid sequence, 1104 residues long: DNA polymerase delta catalytic subunit (1104 aa).

The disordered stretch occupies residues 1–60 (MKRSIVTGGGNNDKKFKAQPPPKNNYRGGGDDEEDDEFEEDDDEDEGDEFGEEEDEDDID). The segment covering 31 to 60 (DDEEDDEFEEDDDEDEGDEFGEEEDEDDID) has biased composition (acidic residues). The Zn(2+) site is built by C1012, C1015, C1027, and C1030. A CysA-type zinc finger spans residues 1012–1030 (CMNCPKELTDTESTTCINC). The [4Fe-4S] cluster site is built by C1059, C1062, C1072, and C1077. The CysB motif signature appears at 1059 to 1077 (CQRCSGSLHQPVLCSNRDC).

Belongs to the DNA polymerase type-B family. Heterotetramer composed of subunits of 125 kDa, 50 kDa, 66 kDa and 12 kDa. The 125 kDa subunit contains the polymerase active site and most likely the active site for the 3'-5' exonuclease activity. It depends on [4Fe-4S] cluster as a cofactor.

It localises to the nucleus. It carries out the reaction DNA(n) + a 2'-deoxyribonucleoside 5'-triphosphate = DNA(n+1) + diphosphate. In terms of biological role, possesses two enzymatic activities: DNA synthesis (polymerase) and an exonucleolytic activity that degrades single stranded DNA in the 3'- to 5'-direction. This Dictyostelium discoideum (Social amoeba) protein is DNA polymerase delta catalytic subunit (pold1).